The sequence spans 799 residues: 1-phosphatidylinositol 4,5-bisphosphate phosphodiesterase delta-4 (799 aa).

One can recognise a PH domain in the interval 16 to 124 (LLMQEGMPMR…WMRGLHLLVD (109 aa)). The segment at 26–53 (KVRSKSWKKLRYFRLQNDGMTVWHARQA) is substrate binding. 3 consecutive EF-hand domains span residues 134–169 (RLDQWLSDWFQRGDKNQDGKMSFQEVQRLLHLMNVE), 170–205 (MDQEYAFSLFQAADTSQSGTLEGEEFVEFYKALTKR), and 206–237 (AEVQELFESFSADGQKLTLLEFSDFLREEQKE). Ca(2+) contacts are provided by Asp147, Asn149, Asp151, Lys153, Glu158, Asp183, Ser185, Ser187, Thr189, and Glu194. The short motif at 213–243 (ESFSADGQKLTLLEFSDFLREEQKERDCTSE) is the GBA element. The region spanning 290–435 (QDMTQPLNHY…LRRKILVKGK (146 aa)) is the PI-PLC X-box domain. His305 is an active-site residue. Residues Asn306, Glu335, and Asp337 each contribute to the Ca(2+) site. Residue His350 is part of the active site. Glu384 provides a ligand contact to Ca(2+). Lys433 and Lys435 together coordinate substrate. Residue Ser460 is modified to Phosphoserine. The 117-residue stretch at 530 to 646 (LSSLVIYLKS…GYVLKPDFLR (117 aa)) folds into the PI-PLC Y-box domain. Substrate contacts are provided by Ser559 and Arg586. In terms of domain architecture, C2 spans 646 to 773 (RDNQSSFHPE…QGYRHIHLLS (128 aa)). Ca(2+)-binding residues include Ile687, Asp689, Asn713, Asp742, Tyr743, and Asp744. The short motif at 768–771 (HIHL) is the PDZ-binding element.

As to quaternary structure, interacts with GRIP1. Interacts (via GBA motif) with guanine nucleotide-binding protein G(i) alpha subunit GNAI3 (inactive GDP-bound form); low-affinity interaction. Ca(2+) is required as a cofactor.

It is found in the membrane. The protein resides in the nucleus. The protein localises to the cytoplasm. Its subcellular location is the endoplasmic reticulum. It catalyses the reaction a 1,2-diacyl-sn-glycero-3-phospho-(1D-myo-inositol-4,5-bisphosphate) + H2O = 1D-myo-inositol 1,4,5-trisphosphate + a 1,2-diacyl-sn-glycerol + H(+). The catalysed reaction is a 1,2-diacyl-sn-glycero-3-phospho-(1D-myo-inositol) + H2O = 1D-myo-inositol 1-phosphate + a 1,2-diacyl-sn-glycerol + H(+). Its function is as follows. Hydrolyzes the phosphatidylinositol 4,5-bisphosphate (PIP2) to generate 2 second messenger molecules diacylglycerol (DAG) and inositol 1,4,5-trisphosphate (IP3). DAG mediates the activation of protein kinase C (PKC), while IP3 releases Ca(2+) from intracellular stores. Required for acrosome reaction in sperm during fertilization, probably by acting as an important enzyme for intracellular Ca(2+) mobilization in the zona pellucida-induced acrosome reaction. May play a role in cell growth. Modulates the liver regeneration in cooperation with nuclear PKC. Overexpression up-regulates the Erk signaling pathway and proliferation. This Macaca fascicularis (Crab-eating macaque) protein is 1-phosphatidylinositol 4,5-bisphosphate phosphodiesterase delta-4 (PLCD4).